The sequence spans 173 residues: Protein-export protein SecB (173 aa).

It belongs to the SecB family. Homotetramer, a dimer of dimers. One homotetramer interacts with 1 SecA dimer.

It localises to the cytoplasm. In terms of biological role, one of the proteins required for the normal export of preproteins out of the cell cytoplasm. It is a molecular chaperone that binds to a subset of precursor proteins, maintaining them in a translocation-competent state. It also specifically binds to its receptor SecA. This is Protein-export protein SecB from Novosphingobium aromaticivorans (strain ATCC 700278 / DSM 12444 / CCUG 56034 / CIP 105152 / NBRC 16084 / F199).